We begin with the raw amino-acid sequence, 321 residues long: MIDFRPFYQQIAVSELSSWLETLPSQLARWQKQTHGEYAKWAKIVDFLPHLKTARIDLKTAVKSEPVSPLSQGEQQRIIYHLKQLMPWRKGPYHLHGIHVDCEWRSDFKWDRVLPHLAPLQDRLILDVGCGSGYHMWRMVGEGAKMVVGIDPTELFLCQFEAVRKLLNNDRRANLIPLGIEEMQPLGVFDTVFSMGVLYHRKSPLDHLSQLKNQLRKGGELVLETLVTDGDEHHVLVPAERYAKMKNVYFIPSVPCLINWLEKSGFSNVRCVDVEVTSLEEQRKTEWLENESLIDFLDPNDHSKTIEGYPAPKRAVILANK.

Residues lysine 90, tryptophan 104, lysine 109, glycine 129, 151-153, 180-181, methionine 195, tyrosine 199, and arginine 314 each bind carboxy-S-adenosyl-L-methionine; these read DPT and IE.

This sequence belongs to the class I-like SAM-binding methyltransferase superfamily. CmoB family. As to quaternary structure, homotetramer.

It catalyses the reaction carboxy-S-adenosyl-L-methionine + 5-hydroxyuridine(34) in tRNA = 5-carboxymethoxyuridine(34) in tRNA + S-adenosyl-L-homocysteine + H(+). Catalyzes carboxymethyl transfer from carboxy-S-adenosyl-L-methionine (Cx-SAM) to 5-hydroxyuridine (ho5U) to form 5-carboxymethoxyuridine (cmo5U) at position 34 in tRNAs. The polypeptide is tRNA U34 carboxymethyltransferase (Mannheimia succiniciproducens (strain KCTC 0769BP / MBEL55E)).